We begin with the raw amino-acid sequence, 147 residues long: uncharacterized protein (147 aa).

Residues 13–35 traverse the membrane as a helical segment; that stretch reads NSRINLLGILVLNVVCGKSSIFF.

It is found in the membrane. This is an uncharacterized protein from Saccharomyces cerevisiae (strain ATCC 204508 / S288c) (Baker's yeast).